We begin with the raw amino-acid sequence, 292 residues long: G1/S-specific cyclin-D3 (292 aa).

The Cyclin N-terminal domain occupies 27 to 152 (VLQSLLRLEE…LVLGKLKWDL (126 aa)). The disordered stretch occupies residues 256–292 (REAAQTAPSPVPKAPRGSSSQGPSQTSTPTDVTAIHL). 2 positions are modified to phosphoserine: Ser264 and Ser279. The segment covering 272–285 (GSSSQGPSQTSTPT) has biased composition (low complexity). Thr283 carries the post-translational modification Phosphothreonine.

The protein belongs to the cyclin family. Cyclin D subfamily. Interacts with the CDK4 and CDK6 protein kinases to form a serine/threonine kinase holoenzyme complex. The cyclin subunit imparts substrate specificity to the complex. Interacts with ATF5. Interacts with EIF3K. Component of the ternary complex cyclin D/CDK4/CDKN1B required for nuclear translocation and modulation of CDK4-mediated kinase activity. Can form similar complexes with either CDKN1A or CDKN2A. Post-translationally, phosphorylation at Thr-283 by MAP kinases is required for ubiquitination and degradation by the DCX(AMBRA1) complex. In terms of processing, ubiquitinated by the DCX(AMBRA1) complex during the transition from G1 to S cell phase, leading to its degradation: ubiquitination is dependent on Thr-283 phosphorylation. The DCX(AMBRA1) complex represents the major regulator of CCND3 stability during the G1/S transition. Polyubiquitinated by the SCF(FBXL2) complex, leading to proteasomal degradation.

Its subcellular location is the nucleus. It localises to the cytoplasm. Its function is as follows. Regulatory component of the cyclin D3-CDK4 (DC) complex that phosphorylates and inhibits members of the retinoblastoma (RB) protein family including RB1 and regulates the cell-cycle during G(1)/S transition. Phosphorylation of RB1 allows dissociation of the transcription factor E2F from the RB/E2F complex and the subsequent transcription of E2F target genes which are responsible for the progression through the G(1) phase. Hypophosphorylates RB1 in early G(1) phase. Cyclin D-CDK4 complexes are major integrators of various mitogenenic and antimitogenic signals. Component of the ternary complex, cyclin D3/CDK4/CDKN1B, required for nuclear translocation and activity of the cyclin D-CDK4 complex. Shows transcriptional coactivator activity with ATF5 independently of CDK4. The chain is G1/S-specific cyclin-D3 from Mus musculus (Mouse).